Reading from the N-terminus, the 429-residue chain is MSKSLQAIRGMNDILPEQTPLWRHFEGTVSRLLDNYGYRQIRMPIVEFTELFKRSIGEVTDIVEKEMYTFADRNGDSLTLRPEGTAACVRAVLEHGITGGGQVQKLWYIGPMFRHERPQKGRYRQFHQIGVEVFNLDGPDIDAELIVMTWRLWGMLGIRNAVKLELNSLGTSEARARYRDALVEFLSARLDQLDEDNQRRLKTNPLRVLDTKHPETQAVLVDAPKLADYLDDESRVHFEGLKARLDAAGIPYVINPKLVRGLDYYSKTVFEWVTDQLGAQGTVCAGGRYDGLVEQMGGKPTTGVGFAMGIERLVLLLETLGQVPEEIARQVDVYLCAFGEAAELAALALTEKVRDQLPSLRLQVNAGAGSFKSQFKKADKSGALYALILGEEELAAKVIGVKPLRGQGEQQNIAWDALSEHLASCVVQG.

It belongs to the class-II aminoacyl-tRNA synthetase family. As to quaternary structure, homodimer.

Its subcellular location is the cytoplasm. It catalyses the reaction tRNA(His) + L-histidine + ATP = L-histidyl-tRNA(His) + AMP + diphosphate + H(+). The polypeptide is Histidine--tRNA ligase (Pseudomonas savastanoi pv. phaseolicola (strain 1448A / Race 6) (Pseudomonas syringae pv. phaseolicola (strain 1448A / Race 6))).